Here is a 602-residue protein sequence, read N- to C-terminus: PEX5-related protein (602 aa).

Disordered stretches follow at residues 94-140 (VSQT…PETS) and 167-206 (HLMA…LNSE). 4 positions are modified to phosphoserine: serine 181, serine 229, serine 233, and serine 237. TPR repeat units follow at residues 302–335 (WPGA…DPGN), 336–369 (AEAW…QPNN), and 371–403 (KALM…NPKY). Serine 421 and serine 423 each carry phosphoserine. 3 TPR repeats span residues 450 to 483 (PDLQ…RPED), 485 to 517 (SLWN…QPGF), and 519 to 551 (RSRY…QRKS).

This sequence belongs to the peroxisomal targeting signal receptor family. Forms an obligate 4:4 complex with HCN2. Interacts with RAB8B. Interacts with HCN3. Interacts with HCN4 with a 4:4 HCN4:PEX5L stoichiometry; reduces the effects of cAMP on the voltage-dependence and rate of activation of HCN4. As to expression, brain specific.

The protein localises to the cytoplasm. It localises to the membrane. In terms of biological role, accessory subunit of hyperpolarization-activated cyclic nucleotide-gated (HCN) channels, regulating their cell-surface expression and cyclic nucleotide dependence. The sequence is that of PEX5-related protein (Pex5l) from Rattus norvegicus (Rat).